We begin with the raw amino-acid sequence, 160 residues long: Putative UPF0479 protein YIL177W-A (160 aa).

Transmembrane regions (helical) follow at residues 39-59 and 136-156; these read IVFC…KVLQ and VPMI…ISQH.

This sequence belongs to the UPF0479 family.

Its subcellular location is the membrane. The protein is Putative UPF0479 protein YIL177W-A of Saccharomyces cerevisiae (strain ATCC 204508 / S288c) (Baker's yeast).